Here is a 674-residue protein sequence, read N- to C-terminus: Carbon monoxide dehydrogenase/acetyl-CoA synthase subunit beta (674 aa).

Residues 1–25 form a disordered region; sequence MPRFRDLSHNCRPSEAPRVMEPKNR. [4Fe-4S] cluster is bound by residues C59, C67, C68, C71, C76, and C90. Residues H283, C317, C355, C470, C500, and C550 each coordinate [Ni-4Fe-4S] cluster.

As to quaternary structure, tetramer of two alpha and two beta chains. [Ni-Fe-S] cluster is required as a cofactor. Requires [4Fe-4S] cluster as cofactor.

The enzyme catalyses CO + 2 oxidized [2Fe-2S]-[ferredoxin] + H2O = 2 reduced [2Fe-2S]-[ferredoxin] + CO2 + 2 H(+). In terms of biological role, the beta subunit (this protein) generates CO from CO(2), while the alpha subunit combines the CO with CoA and a methyl group to form acetyl-CoA. The methyl group, which is incorporated into acetyl-CoA, is transferred to the alpha subunit by a corrinoid iron-sulfur protein. This is Carbon monoxide dehydrogenase/acetyl-CoA synthase subunit beta from Moorella thermoacetica (Clostridium thermoaceticum).